A 297-amino-acid chain; its full sequence is 5'-3' exonuclease (297 aa).

Residues 171–262 (EPDQIVDFKA…MKLEKELFAI (92 aa)) enclose the 5'-3' exonuclease domain.

Functionally, 5'-3' exonuclease acting preferentially on double-stranded DNA. This is 5'-3' exonuclease (polA) from Mycoplasmopsis pulmonis (strain UAB CTIP) (Mycoplasma pulmonis).